The chain runs to 307 residues: Malate dehydrogenase (307 aa).

Residues 8-13 (GAGNVG) and D32 contribute to the NAD(+) site. R81 and R87 together coordinate substrate. Residues N94 and 117 to 119 (VSN) each bind NAD(+). Substrate contacts are provided by N119 and R150. Catalysis depends on H174, which acts as the Proton acceptor.

Belongs to the LDH/MDH superfamily. MDH type 3 family.

The catalysed reaction is (S)-malate + NAD(+) = oxaloacetate + NADH + H(+). Functionally, catalyzes the reversible oxidation of malate to oxaloacetate. The polypeptide is Malate dehydrogenase (Dehalococcoides mccartyi (strain ATCC BAA-2100 / JCM 16839 / KCTC 5957 / BAV1)).